The chain runs to 158 residues: Transcription elongation factor GreA (158 aa).

Residues 53-73 are a coiled coil; it reads EQQGMVEARIRDIEAKLSNAQ.

This sequence belongs to the GreA/GreB family.

Functionally, necessary for efficient RNA polymerase transcription elongation past template-encoded arresting sites. The arresting sites in DNA have the property of trapping a certain fraction of elongating RNA polymerases that pass through, resulting in locked ternary complexes. Cleavage of the nascent transcript by cleavage factors such as GreA or GreB allows the resumption of elongation from the new 3'terminus. GreA releases sequences of 2 to 3 nucleotides. The chain is Transcription elongation factor GreA from Pseudomonas aeruginosa (strain ATCC 15692 / DSM 22644 / CIP 104116 / JCM 14847 / LMG 12228 / 1C / PRS 101 / PAO1).